Here is a 113-residue protein sequence, read N- to C-terminus: Hydrogenase maturation factor HypA (113 aa).

Histidine 2 provides a ligand contact to Ni(2+). 4 residues coordinate Zn(2+): cysteine 70, cysteine 73, cysteine 86, and cysteine 88.

This sequence belongs to the HypA/HybF family.

Functionally, involved in the maturation of [NiFe] hydrogenases. Required for nickel insertion into the metal center of the hydrogenase. This chain is Hydrogenase maturation factor HypA, found in Trichormus variabilis (strain ATCC 29413 / PCC 7937) (Anabaena variabilis).